The primary structure comprises 372 residues: MSNQHTLLISNLLPVGSNISTWWNFGSMLLTCLMMQIMTGFFLAIHYTANINLAFSSVIHIMRDVPYGWIMQNIHAIGASVFFICIYIHIARGLYYGLYMNKNVWFSGTALLITLMATAFFGYVLPWGQMSFWAATVITNLLTAIPYLGATVTTWFWGGFSVNDPTLTGFFALHFILPFTIASLSSIHIILLHNEGSSNPLGTNSDIDKIPFHPYHSYKDMLMTTSMFMLMFMILSFMPDLFNDPENFSKANPLITPQHIKPEWYFLFAYGILRSIPNKLGGTLALLMSVTILITAPFTHTSLVRSMTFRPLAQTLFWTLIATFITITWTATKPVEPPFILISQMASVFYFSFFIMNPLLGWTENKIMMMNS.

Transmembrane regions (helical) follow at residues 25-45, 69-90, 105-125, and 170-190; these read FGSM…FLAI, WIMQ…YIHI, WFSG…GYVL, and FFAL…IHII. Positions 75 and 89 each coordinate heme b. Heme b is bound by residues H174 and H188. H193 contacts a ubiquinone. 4 consecutive transmembrane segments (helical) span residues 218 to 238, 280 to 300, 312 to 332, and 339 to 358; these read YKDM…LSFM, LGGT…PFTH, LAQT…WTAT, and FILI…IMNP.

The protein belongs to the cytochrome b family. As to quaternary structure, the cytochrome bc1 complex contains 3 respiratory subunits (MT-CYB, CYC1 and UQCRFS1), 2 core proteins (UQCRC1 and UQCRC2) and probably 6 low-molecular weight proteins. Requires heme b as cofactor.

Its subcellular location is the mitochondrion inner membrane. Component of the ubiquinol-cytochrome c reductase complex (complex III or cytochrome b-c1 complex) that is part of the mitochondrial respiratory chain. The b-c1 complex mediates electron transfer from ubiquinol to cytochrome c. Contributes to the generation of a proton gradient across the mitochondrial membrane that is then used for ATP synthesis. This is Cytochrome b (MT-CYB) from Sinomicrurus japonicus (Coral snake).